Reading from the N-terminus, the 356-residue chain is MTTLYSDWATESFEYDESSEACFIGDIVAFGTIFLSIFYSLVFAFGLVGNLLVVCALTSSRKPKSITDIYLLNLALSDLLFVATLPFWTHYVISEQGFHNAVCKLTTALFFIGFFGGIFFITVISIDRYMAIVLAANSINNRTVQHGVTTSLGVWAAAILVAAPQFMFTKQKGNECLGDYPEVLQDIWPVLRNTEANFLGFLLPVLIMSYCYFRIIQTLFSCKNHKKAKAIKLILLVVIVFFLFWTPYNVMIFLETLKLYGFFPNCDMKRDLRLALSVTETVAFSHCCLNPLIYAFAGQKFRRYLRHLSRKCQAVLCGRPVHVSFSPSESQRSRQESIVSSNFTHYTSDGDASLLL.

At Met-1–Asp-26 the chain is on the extracellular side. Residues Ile-27–Leu-47 traverse the membrane as a helical segment. Residues Val-48–Asp-68 are Cytoplasmic-facing. The helical transmembrane segment at Ile-69–Thr-89 threads the bilayer. Over His-90–Leu-105 the chain is Extracellular. The cysteines at positions 103 and 176 are disulfide-linked. A helical transmembrane segment spans residues Thr-106 to Ile-126. At Asp-127 to Gly-147 the chain is on the cytoplasmic side. A helical transmembrane segment spans residues Val-148 to Phe-168. The Extracellular segment spans residues Thr-169 to Glu-195. The helical transmembrane segment at Ala-196–Ile-216 threads the bilayer. Topologically, residues Gln-217–Lys-232 are cytoplasmic. Residues Leu-233–Phe-253 traverse the membrane as a helical segment. Residues Leu-254–Ser-277 lie on the Extracellular side of the membrane. Residues Val-278–Gly-298 form a helical membrane-spanning segment. Residues Gln-299–Leu-356 lie on the Cytoplasmic side of the membrane. Thr-347 bears the Phosphothreonine mark.

It belongs to the G-protein coupled receptor 1 family. As to quaternary structure, found in a ternary complex with CX3CL1 and ITGAV:ITGB3 or ITGA4:ITGB1. In terms of processing, this protein is not N-glycosylated which is unusual for G-protein-coupled receptors.

Its subcellular location is the cell membrane. In terms of biological role, receptor for the C-X3-C chemokine fractalkine (CX3CL1) present on many early leukocyte cells; CX3CR1-CX3CL1 signaling exerts distinct functions in different tissue compartments, such as immune response, inflammation, cell adhesion and chemotaxis. CX3CR1-CX3CL1 signaling mediates cell migratory functions. Responsible for the recruitment of natural killer (NK) cells to inflamed tissues. Acts as a regulator of inflammation process leading to atherogenesis by mediating macrophage and monocyte recruitment to inflamed atherosclerotic plaques, promoting cell survival. Involved in airway inflammation by promoting interleukin 2-producing T helper (Th2) cell survival in inflamed lung. Involved in the migration of circulating monocytes to non-inflamed tissues, where they differentiate into macrophages and dendritic cells. Acts as a negative regulator of angiogenesis, probably by promoting macrophage chemotaxis. Plays a key role in brain microglia by regulating inflammatory response in the central nervous system (CNS) and regulating synapse maturation. Required to restrain the microglial inflammatory response in the CNS and the resulting parenchymal damage in response to pathological stimuli. Involved in brain development by participating in synaptic pruning, a natural process during which brain microglia eliminates extra synapses during postnatal development. Synaptic pruning by microglia is required to promote the maturation of circuit connectivity during brain development. Acts as an important regulator of the gut microbiota by controlling immunity to intestinal bacteria and fungi. Expressed in lamina propria dendritic cells in the small intestine, which form transepithelial dendrites capable of taking up bacteria in order to provide defense against pathogenic bacteria. Required to initiate innate and adaptive immune responses against dissemination of commensal fungi (mycobiota) component of the gut: expressed in mononuclear phagocytes (MNPs) and acts by promoting induction of antifungal IgG antibodies response to confer protection against disseminated C.albicans or C.auris infection. Also acts as a receptor for C-C motif chemokine CCL26, inducing cell chemotaxis. The chain is CX3C chemokine receptor 1 from Oryctolagus cuniculus (Rabbit).